A 1749-amino-acid chain; its full sequence is Nucleoporin NUP188 (1749 aa).

The residue at position 2 (alanine 2) is an N-acetylalanine. 2 disordered regions span residues 1514–1542 and 1707–1733; these read VAQRVQRPPSAASAAPSSSKQPAADTEAS and PSSPATGVLPSPQGKSTSLSKASPESQ. Residues 1521–1537 show a composition bias toward low complexity; that stretch reads PPSAASAAPSSSKQPAA. Phosphoserine is present on residues serine 1523 and serine 1709. Phosphothreonine is present on threonine 1712. Serine 1717 bears the Phosphoserine mark. Over residues 1719–1732 the composition is skewed to polar residues; the sequence is QGKSTSLSKASPES.

Belongs to the Nup188 family. As to quaternary structure, part of the nuclear pore complex (NPC).

It is found in the nucleus. Its subcellular location is the nuclear pore complex. Its function is as follows. Component of the nuclear pore complex (NPC), a complex required for the trafficking across the nuclear envelope. Required for proper protein transport into the nucleus. The protein is Nucleoporin NUP188 (NUP188) of Homo sapiens (Human).